Reading from the N-terminus, the 675-residue chain is Vacuolar protein sorting-associated protein 5 (675 aa).

Disordered regions lie at residues 1 to 26 (MDYEDNLEAPVWDELNHEGDKTQSLV), 65 to 84 (EWKDPGLSVAGNPQLEEHDN), and 165 to 219 (RAQR…RREN). Basic residues predominate over residues 168–180 (RNSKRNHSLKAKR). Residues 195–204 (PLKKAEKENE) show a composition bias toward basic and acidic residues. Residues 279–394 (VAFKVEVKDP…LFLTSDDFSS (116 aa)) form the PX domain. The a 1,2-diacyl-sn-glycero-3-phospho-(1D-myo-inositol-3-phosphate) site is built by R320, K346, and R360.

It belongs to the sorting nexin family. In terms of assembly, component of the retromer complex which consists of VPS29, VPS26, VPS35, VPS5 and VPS17. Component of a retromer subcomplex consisting of VPSD5 and VPS17. Phosphorylated on serine residue(s).

The protein resides in the cytoplasm. It is found in the golgi apparatus membrane. The protein localises to the endosome membrane. Plays a role in vesicular protein sorting. Required for retention of late Golgi membrane proteins and vacuolar biogenesis. Component of the membrane-associated retromer complex which is essential in endosome-to-Golgi retrograde transport. The VPS5-VPS17 subcomplex may assemble onto the membrane to promote vesicle formation. In Saccharomyces cerevisiae (strain ATCC 204508 / S288c) (Baker's yeast), this protein is Vacuolar protein sorting-associated protein 5 (VPS5).